Here is a 609-residue protein sequence, read N- to C-terminus: Threonine--tRNA ligase (609 aa).

The segment at 1 to 143 (MRVLYIHAER…SFKPEGAKVE (143 aa)) is editing domain. Catalytic stretches follow at residues 195–491 (PRYL…PRLP) and 196–491 (RYLD…PRLP). Zn(2+)-binding residues include C288, H339, and H460.

This sequence belongs to the class-II aminoacyl-tRNA synthetase family. Homodimer. Zn(2+) is required as a cofactor.

Its subcellular location is the cytoplasm. It carries out the reaction tRNA(Thr) + L-threonine + ATP = L-threonyl-tRNA(Thr) + AMP + diphosphate + H(+). In terms of biological role, catalyzes the attachment of threonine to tRNA(Thr) in a two-step reaction: L-threonine is first activated by ATP to form Thr-AMP and then transferred to the acceptor end of tRNA(Thr). Also edits incorrectly charged L-seryl-tRNA(Thr). This Pyrobaculum islandicum (strain DSM 4184 / JCM 9189 / GEO3) protein is Threonine--tRNA ligase.